Here is a 60-residue protein sequence, read N- to C-terminus: Beta-toxin BotIT2 (60 aa).

The LCN-type CS-alpha/beta domain maps to 1–60 (DGYIKGYKGCKITCVINDDYCDTECKAEGGTYGYCWKWGLACWCEDLPDEKRWKSETNTC). Intrachain disulfides connect C10–C60, C14–C35, C21–C42, and C25–C44.

The protein belongs to the long (4 C-C) scorpion toxin superfamily. Sodium channel inhibitor family. Beta subfamily. In terms of tissue distribution, expressed by the venom gland.

It is found in the secreted. Its function is as follows. Beta toxins bind voltage-independently at site-4 of sodium channels (Nav) and shift the voltage of activation toward more negative potentials thereby affecting sodium channel activation and promoting spontaneous and repetitive firing. This toxin specifically acts by inducing a new current with very slow activation/deactivation kinetics due to the transformation of normal fast channels into slow ones. It possess properties of excitatory and depressant toxins. It is highly active on insects and less active on mammals. This chain is Beta-toxin BotIT2, found in Buthus occitanus tunetanus (Common European scorpion).